Here is a 70-residue protein sequence, read N- to C-terminus: Enhancer of split m6 protein (70 aa).

In Drosophila melanogaster (Fruit fly), this protein is Enhancer of split m6 protein.